The sequence spans 315 residues: MAWSNQSAVTEFILRGLSSSLELQIFYFLFFSIVYAATVLGNLLIVVTIASEPHLHSPMYFLLGNLSFIDMSLASFATPKMIADFLREHKAISFEGCMTQMFFLHLLGGAEIVLLISMSFDRYVAICKPLHYLTIMSRRMCVGLVILSWIVGIFHALSQLAFTVNLPFCGPNEVDSFFCDLPLVIKLACVDTYILGVFMISTSGMIALVCFILLVISYTIILVTVRQRSSGGSSKALSTCSAHFTVVTLFFGPCTFIYVWPFTNFPIDKVLSVFYTIYTPLLNPVIYTVRNKDVKYSMRKLSSHIFKSRKTDHTP.

Over 1-25 the chain is Extracellular; sequence MAWSNQSAVTEFILRGLSSSLELQI. N-linked (GlcNAc...) asparagine glycosylation is present at N5. The chain crosses the membrane as a helical span at residues 26–49; the sequence is FYFLFFSIVYAATVLGNLLIVVTI. Residues 50 to 57 are Cytoplasmic-facing; that stretch reads ASEPHLHS. Residues 58 to 79 traverse the membrane as a helical segment; that stretch reads PMYFLLGNLSFIDMSLASFATP. The Extracellular portion of the chain corresponds to 80-100; sequence KMIADFLREHKAISFEGCMTQ. The cysteines at positions 97 and 189 are disulfide-linked. The helical transmembrane segment at 101 to 120 threads the bilayer; it reads MFFLHLLGGAEIVLLISMSF. The Cytoplasmic segment spans residues 121–139; that stretch reads DRYVAICKPLHYLTIMSRR. A helical transmembrane segment spans residues 140–158; that stretch reads MCVGLVILSWIVGIFHALS. Over 159–195 the chain is Extracellular; the sequence is QLAFTVNLPFCGPNEVDSFFCDLPLVIKLACVDTYIL. The helical transmembrane segment at 196 to 219 threads the bilayer; that stretch reads GVFMISTSGMIALVCFILLVISYT. Topologically, residues 220 to 235 are cytoplasmic; the sequence is IILVTVRQRSSGGSSK. Residues 236–258 traverse the membrane as a helical segment; the sequence is ALSTCSAHFTVVTLFFGPCTFIY. Residues 259–269 are Extracellular-facing; the sequence is VWPFTNFPIDK. Residues 270 to 289 traverse the membrane as a helical segment; the sequence is VLSVFYTIYTPLLNPVIYTV. The Cytoplasmic segment spans residues 290–315; sequence RNKDVKYSMRKLSSHIFKSRKTDHTP.

This sequence belongs to the G-protein coupled receptor 1 family.

Its subcellular location is the cell membrane. Odorant receptor. This Homo sapiens (Human) protein is Olfactory receptor 4K3 (OR4K3).